Reading from the N-terminus, the 520-residue chain is Translation initiation factor IF3-1, mitochondrial (520 aa).

The transit peptide at 1–66 directs the protein to the mitochondrion; it reads MAIWRIINRS…SNIFQNLRFL (66 aa). Basic and acidic residues predominate over residues 271–282; that stretch reads ARVKEESPKPDS. Residues 271–520 form a disordered region; the sequence is ARVKEESPKP…YGIFSTPKTK (250 aa). Positions 336–361 are enriched in polar residues; sequence EPQSPNQHVNPQRPRFSNQAPNQQPT. The span at 369-379 shows a compositional bias: pro residues; sequence PNQPPSAPRPQ. 2 stretches are compositionally biased toward polar residues: residues 404–422 and 458–468; these read NQAP…FPNQ and FQNQAPNQQPT. A compositionally biased stretch (pro residues) spans 473 to 485; that stretch reads PQPPNPPRAPPRP.

The protein belongs to the IF-3 family. In terms of assembly, monomer.

It is found in the mitochondrion. Functionally, IF-3 binds to the 30S ribosomal subunit and shifts the equilibrium between 70S ribosomes and their 50S and 30S subunits in favor of the free subunits, thus enhancing the availability of 30S subunits on which protein synthesis initiation begins. The chain is Translation initiation factor IF3-1, mitochondrial from Arabidopsis thaliana (Mouse-ear cress).